The following is a 206-amino-acid chain: Octanoyltransferase (206 aa).

The region spanning 30-206 (PETNDEIWLV…EFVTLLNNSI (177 aa)) is the BPL/LPL catalytic domain. Residues 69–76 (RGGQVTYH), 137–139 (SLG), and 150–152 (GIA) contribute to the substrate site. Residue Cys-168 is the Acyl-thioester intermediate of the active site.

It belongs to the LipB family.

Its subcellular location is the cytoplasm. It carries out the reaction octanoyl-[ACP] + L-lysyl-[protein] = N(6)-octanoyl-L-lysyl-[protein] + holo-[ACP] + H(+). It participates in protein modification; protein lipoylation via endogenous pathway; protein N(6)-(lipoyl)lysine from octanoyl-[acyl-carrier-protein]: step 1/2. In terms of biological role, catalyzes the transfer of endogenously produced octanoic acid from octanoyl-acyl-carrier-protein onto the lipoyl domains of lipoate-dependent enzymes. Lipoyl-ACP can also act as a substrate although octanoyl-ACP is likely to be the physiological substrate. The polypeptide is Octanoyltransferase (Francisella tularensis subsp. tularensis (strain FSC 198)).